Here is a 542-residue protein sequence, read N- to C-terminus: Chaperonin GroEL 1 (542 aa).

ATP-binding positions include 30-33 (TLGP), Lys-51, 87-91 (DGTTT), Gly-415, and Asp-496.

It belongs to the chaperonin (HSP60) family. In terms of assembly, forms a cylinder of 14 subunits composed of two heptameric rings stacked back-to-back. Interacts with the co-chaperonin GroES.

Its subcellular location is the cytoplasm. The enzyme catalyses ATP + H2O + a folded polypeptide = ADP + phosphate + an unfolded polypeptide.. Together with its co-chaperonin GroES, plays an essential role in assisting protein folding. The GroEL-GroES system forms a nano-cage that allows encapsulation of the non-native substrate proteins and provides a physical environment optimized to promote and accelerate protein folding. This is Chaperonin GroEL 1 from Sinorhizobium fredii (strain NBRC 101917 / NGR234).